A 238-amino-acid polypeptide reads, in one-letter code: Ubiquinone biosynthesis O-methyltransferase (238 aa).

S-adenosyl-L-methionine is bound by residues R40, G59, D80, and M125.

It belongs to the methyltransferase superfamily. UbiG/COQ3 family.

The enzyme catalyses a 3-demethylubiquinol + S-adenosyl-L-methionine = a ubiquinol + S-adenosyl-L-homocysteine + H(+). It carries out the reaction a 3-(all-trans-polyprenyl)benzene-1,2-diol + S-adenosyl-L-methionine = a 2-methoxy-6-(all-trans-polyprenyl)phenol + S-adenosyl-L-homocysteine + H(+). Its pathway is cofactor biosynthesis; ubiquinone biosynthesis. O-methyltransferase that catalyzes the 2 O-methylation steps in the ubiquinone biosynthetic pathway. The chain is Ubiquinone biosynthesis O-methyltransferase from Paracidovorax citrulli (strain AAC00-1) (Acidovorax citrulli).